Here is an 821-residue protein sequence, read N- to C-terminus: PX domain-containing protein C1450.12 (821 aa).

The PX domain occupies 171-310 (AYVLGVRQST…SFLTDDPVTL (140 aa)). Residues 235–271 (KDDHDTYLNSSEDSTLSPLPSRSSDTNDPQSDSQHVL) are disordered. Polar residues predominate over residues 241 to 268 (YLNSSEDSTLSPLPSRSSDTNDPQSDSQ). Phosphothreonine occurs at positions 260 and 597. 2 stretches are compositionally biased toward acidic residues: residues 737 to 746 (GDEDDQDEND) and 754 to 766 (EHME…EEFD). The interval 737–766 (GDEDDQDENDQVTKVEEEHMEDDDSVEEFD) is disordered. S761 carries the phosphoserine modification.

Its subcellular location is the mitochondrion membrane. The chain is PX domain-containing protein C1450.12 from Schizosaccharomyces pombe (strain 972 / ATCC 24843) (Fission yeast).